The chain runs to 301 residues: Probable alpha-L-glutamate ligase (301 aa).

The region spanning 104–287 (MQLLSRKGIG…VAGLIVDFIE (184 aa)) is the ATP-grasp domain. Residues K141, 178–179 (EF), D187, and 211–213 (RSN) each bind ATP. The Mg(2+) site is built by D248, E260, and N262. Mn(2+)-binding residues include D248, E260, and N262.

It belongs to the RimK family. Mg(2+) serves as cofactor. It depends on Mn(2+) as a cofactor.

The protein is Probable alpha-L-glutamate ligase of Aliivibrio salmonicida (strain LFI1238) (Vibrio salmonicida (strain LFI1238)).